The following is a 311-amino-acid chain: MAFVKAIKNKAYFKRFQVKYRRRREGKTDYAARRRLILQDKNKYNAPKYRFVVRVTNSRVLCQVMYATLQGDRLVCSADSQELTRYGIKVGLTNYSAAYATGLLLARRLLKQKGLADEFKGLEKPSGEEYHIEEVSEERRPFKCVLDVGIVATTVGNRVFGAMKGACDGGLHIPHSNKRFPGFTKGEDGADDSYNPEVHRARIYGLHVAEYMRTLKEEDPERYQAQFSAYIRNKIDPDSIEKMYEEAFQKIRANPDPVKKEAREVKRVRQGAMIKTAKSQYVRNVKLDKETRKERVLKKIQMVADKMAEEE.

Belongs to the universal ribosomal protein uL18 family. In terms of assembly, component of the large ribosomal subunit (LSU).

The protein localises to the cytoplasm. The protein resides in the nucleus. Component of the ribosome, a large ribonucleoprotein complex responsible for the synthesis of proteins in the cell. The small ribosomal subunit (SSU) binds messenger RNAs (mRNAs) and translates the encoded message by selecting cognate aminoacyl-transfer RNA (tRNA) molecules. The large subunit (LSU) contains the ribosomal catalytic site termed the peptidyl transferase center (PTC), which catalyzes the formation of peptide bonds, thereby polymerizing the amino acids delivered by tRNAs into a polypeptide chain. The nascent polypeptides leave the ribosome through a tunnel in the LSU and interact with protein factors that function in enzymatic processing, targeting, and the membrane insertion of nascent chains at the exit of the ribosomal tunnel. The protein is Large ribosomal subunit protein uL18 (RPL5) of Eimeria tenella (Coccidian parasite).